We begin with the raw amino-acid sequence, 303 residues long: MAAGPSMWVGSVYLYIKSDTVPLPGKYTHQKALIYEALRSAISESTRGCRDSIEILKIHSSDQQLILYLKFCGLEPCQRFLKDYKECKVQMQIQNKLKNCFSVEGLPIFTELKIDTGEIDSLLEKEEQCLKYISQMKPTIQKDDELAEIDERLKSIKLDSPSALDSELSLQNSCQCSLPLSLHSNRSYHIEGSTFHFQGEEFVDRPLTSAHIQHFAKSVGKNWKPVGRSLGKTCRALNDTAIENLAYEFDRDGRYEQAYQLLRLFKDSEGKKATVQRLVQALEENGLNSIALDLLSLNENGLK.

A Nuclear export signal motif is present at residues 141 to 157; sequence QKDDELAEIDERLKSIK. The Death domain occupies 208-298; sequence TSAHIQHFAK…SIALDLLSLN (91 aa). The Nuclear localization signal motif lies at 224–237; that stretch reads KPVGRSLGKTCRAL.

In terms of assembly, heterodimer with tnfrsf1a.

The protein localises to the nucleus. It is found in the cytoplasm. The protein resides in the cytoskeleton. Functionally, adapter molecule for tnfrsf1a that specifically associates with the cytoplasmic domain of activated tnfrsf1a mediating its interaction with fadd. The protein is Tumor necrosis factor receptor type 1-associated DEATH domain protein of Xenopus laevis (African clawed frog).